The sequence spans 862 residues: S-layer protein EA1 (862 aa).

A signal peptide spans 1 to 29; the sequence is MAKTNSYKKVIAGTMTAAMVAGIVSPVAA. SLH domains lie at 30–93, 94–151, and 152–214; these read AGKS…NAQP, SFKD…KVNG, and ELVT…DNAQ.

Its subcellular location is the secreted. The protein localises to the cell wall. It is found in the S-layer. The S-layer is a paracrystalline mono-layered assembly of proteins which coat the surface of bacteria. The protein is S-layer protein EA1 (eag) of Bacillus anthracis.